We begin with the raw amino-acid sequence, 1486 residues long: Protein PRRC2B (1486 aa).

Disordered regions lie at residues 1 to 20 (MSDRLGQITQGKDGKSKYST), 39 to 306 (VIPR…FPLP), 320 to 341 (QMNDQDGKERPGVARPVRPLRQ), 385 to 519 (KFSD…AREE), and 531 to 658 (LDQK…EQLY). The span at 88–137 (ANKQDQQDPKSSSVTASQPPESQPQPGLQKSVSNLQKPTQSISQENTNSV) shows a compositional bias: polar residues. Phosphoserine is present on residues serine 166, serine 168, serine 222, and serine 226. Positions 219 to 235 (SAASLSASPTELGSRNA) are enriched in polar residues. The residue at position 228 (threonine 228) is a Phosphothreonine. Residue lysine 251 forms a Glycyl lysine isopeptide (Lys-Gly) (interchain with G-Cter in SUMO2) linkage. A compositionally biased stretch (polar residues) spans 288–300 (SPQSSENQTTVER). A phosphoserine mark is found at serine 387 and serine 415. Composition is skewed to basic and acidic residues over residues 422-433 (TDAKRTQEEGKD), 478-488 (HSAEDKEDKPP), and 501-519 (AVERARKRREEEERRAREE). The residue at position 479 (serine 479) is a Phosphoserine. Positions 494-544 (IQSEMSEAVERARKRREEEERRAREERLAACAAKLKQLDQKCRQAQKANET) form a coiled coil. Serine 555 is subject to Phosphoserine. The segment covering 600-611 (SNSSSSSSSSSS) has biased composition (low complexity). Position 621 is a phosphoserine (serine 621). Low complexity predominate over residues 638–656 (QRQQQQQQQQQQQQQQQEQ). A Glycyl lysine isopeptide (Lys-Gly) (interchain with G-Cter in SUMO2) cross-link involves residue lysine 751. A Phosphothreonine modification is found at threonine 753. A phosphoserine mark is found at serine 762 and serine 793. Disordered stretches follow at residues 792–847 (RSPD…EARK), 893–918 (EERRKKEQAAQVPVKGRGLSSRIPPR), and 950–1080 (ALPV…PGAV). Residues 880-904 (IEVLTKKQRRLLEEERRKKEQAAQV) are a coiled coil. A compositionally biased stretch (polar residues) spans 960-986 (SWRTAVTAFSSTEPGTSEQGFKSSQGD). Positions 998-1007 (SSATSSQRSS) are enriched in low complexity. Basic and acidic residues-rich tracts occupy residues 1025–1055 (SKADSHKDQAQKQAEHKDSEQGSAQSKEHRP) and 1062–1074 (RSLKNRKGSEGAE). Residues serine 1070 and serine 1159 each carry the phosphoserine modification. Disordered stretches follow at residues 1177 to 1205 (KAWENSPSLPEQSSPGGAGSGIQPPSSVG), 1410 to 1443 (QSIQLPPGQSLSVGAPRRVPPPGSQPPVLNTSRE), and 1455 to 1486 (ADSKQNVPTGGSAPSPQAYRQSEWMKNPAWEP). Residues 1181–1191 (NSPSLPEQSSP) are compositionally biased toward polar residues. A compositionally biased stretch (low complexity) spans 1410-1421 (QSIQLPPGQSLS). Polar residues predominate over residues 1457 to 1474 (SKQNVPTGGSAPSPQAYR).

This chain is Protein PRRC2B (Prrc2b), found in Mus musculus (Mouse).